Consider the following 135-residue polypeptide: Histone H2A (135 aa).

This sequence belongs to the histone H2A family. As to quaternary structure, the nucleosome is a histone octamer containing two molecules each of H2A, H2B, H3 and H4 assembled in one H3-H4 heterotetramer and two H2A-H2B heterodimers. The octamer wraps approximately 147 bp of DNA.

It is found in the nucleus. It localises to the chromosome. Core component of nucleosome. Nucleosomes wrap and compact DNA into chromatin, limiting DNA accessibility to the cellular machineries which require DNA as a template. Histones thereby play a central role in transcription regulation, DNA repair, DNA replication and chromosomal stability. DNA accessibility is regulated via a complex set of post-translational modifications of histones, also called histone code, and nucleosome remodeling. This is Histone H2A from Trypanosoma cruzi.